A 343-amino-acid polypeptide reads, in one-letter code: Glyceraldehyde-3-phosphate dehydrogenase (343 aa).

Residues Thr-11–Ile-12 and Gly-110 contribute to the NAD(+) site. A D-glyceraldehyde 3-phosphate-binding site is contributed by Ser-139–Asn-141. Residue Cys-140 is the Nucleophile of the active site. Arg-168 is a binding site for NAD(+). His-194–Gly-195 lines the D-glyceraldehyde 3-phosphate pocket. Gln-301 contributes to the NAD(+) binding site.

Belongs to the glyceraldehyde-3-phosphate dehydrogenase family. As to quaternary structure, homotetramer.

Its subcellular location is the cytoplasm. It carries out the reaction D-glyceraldehyde 3-phosphate + phosphate + NADP(+) = (2R)-3-phospho-glyceroyl phosphate + NADPH + H(+). It catalyses the reaction D-glyceraldehyde 3-phosphate + phosphate + NAD(+) = (2R)-3-phospho-glyceroyl phosphate + NADH + H(+). Its pathway is carbohydrate degradation; glycolysis; pyruvate from D-glyceraldehyde 3-phosphate: step 1/5. This chain is Glyceraldehyde-3-phosphate dehydrogenase, found in Methanoregula boonei (strain DSM 21154 / JCM 14090 / 6A8).